The primary structure comprises 478 residues: Ketoisovalerate oxidoreductase subunit VorA (478 aa).

In terms of assembly, heterotrimer of the VorA, VorB and VorC subunits.

This is Ketoisovalerate oxidoreductase subunit VorA (vorA) from Methanothermobacter marburgensis (strain ATCC BAA-927 / DSM 2133 / JCM 14651 / NBRC 100331 / OCM 82 / Marburg) (Methanobacterium thermoautotrophicum).